The chain runs to 893 residues: Translation initiation factor IF-2 (893 aa).

A disordered region spans residues 1–266 (MVDTKNPGDK…AKPAPSKQRG (266 aa)). A compositionally biased stretch (low complexity) spans 59–70 (PADAPTAAAAAP). The segment covering 71 to 92 (APAPAPVPSAAPRPAAPPPPSR) has biased composition (pro residues). Residues 93–104 (PQQSRSQSPSRS) show a composition bias toward low complexity. Composition is skewed to basic and acidic residues over residues 128–148 (ARVRDEEERRAAEAEVARRNS) and 155–196 (AERE…EAKR). Over residues 197 to 226 (PAAAATPAKSATPAARPTGAPAVRAPGVAA) the composition is skewed to low complexity. One can recognise a tr-type G domain in the interval 389-560 (PRSPVVTVMG…ALQAELLDLK (172 aa)). The segment at 398 to 405 (GHVDHGKT) is G1. 398 to 405 (GHVDHGKT) is a binding site for GTP. The tract at residues 423-427 (GITQH) is G2. The tract at residues 446–449 (DTPG) is G3. Residues 446-450 (DTPGH) and 500-503 (NKID) contribute to the GTP site. A G4 region spans residues 500–503 (NKID). The tract at residues 536 to 538 (SAK) is G5.

This sequence belongs to the TRAFAC class translation factor GTPase superfamily. Classic translation factor GTPase family. IF-2 subfamily.

Its subcellular location is the cytoplasm. In terms of biological role, one of the essential components for the initiation of protein synthesis. Protects formylmethionyl-tRNA from spontaneous hydrolysis and promotes its binding to the 30S ribosomal subunits. Also involved in the hydrolysis of GTP during the formation of the 70S ribosomal complex. The chain is Translation initiation factor IF-2 from Rhodopseudomonas palustris (strain BisA53).